The following is a 229-amino-acid chain: Endonuclease V (229 aa).

Mg(2+) is bound by residues Asp-43 and Asp-111.

Belongs to the endonuclease V family. Mg(2+) serves as cofactor.

Its subcellular location is the cytoplasm. The catalysed reaction is Endonucleolytic cleavage at apurinic or apyrimidinic sites to products with a 5'-phosphate.. Its function is as follows. DNA repair enzyme involved in the repair of deaminated bases. Selectively cleaves double-stranded DNA at the second phosphodiester bond 3' to a deoxyinosine leaving behind the intact lesion on the nicked DNA. This chain is Endonuclease V, found in Rippkaea orientalis (strain PCC 8801 / RF-1) (Cyanothece sp. (strain PCC 8801)).